The chain runs to 1068 residues: Self-sufficient cytochrome P450 monooxygenase CYP505U2 (1068 aa).

C408 lines the heme pocket. Positions 464-498 (TTAGMVPESVQSLRQAQKSGKPGNSKSSANESMVG) are disordered. Residues 472–498 (SVQSLRQAQKSGKPGNSKSSANESMVG) show a composition bias toward polar residues. The Flavodoxin-like domain occupies 505–646 (VSIFYGSNSG…DLEKWEESIL (142 aa)). FMN is bound by residues 511-515 (SNSGS) and 590-622 (VFGCGHHDWATTFYKIPILIDELLEQRGAQRVA). The FAD-binding FR-type domain occupies 679–909 (KEFLEATVTS…RRSNPAFHPP (231 aa)).

In the N-terminal section; belongs to the cytochrome P450 family. The cofactor is FAD. Requires FMN as cofactor. Heme serves as cofactor.

It carries out the reaction 2 oxidized [cytochrome P450] + NADPH = 2 reduced [cytochrome P450] + NADP(+) + H(+). The catalysed reaction is an organic molecule + reduced [NADPH--hemoprotein reductase] + O2 = an alcohol + oxidized [NADPH--hemoprotein reductase] + H2O + H(+). It catalyses the reaction dodecanoate + reduced [NADPH--hemoprotein reductase] + O2 = 3-hydroxydodecanoate + oxidized [NADPH--hemoprotein reductase] + H2O + H(+). The enzyme catalyses dodecanoate + reduced [NADPH--hemoprotein reductase] + O2 = 7-hydroxydodecanoate + oxidized [NADPH--hemoprotein reductase] + H2O + H(+). It carries out the reaction dodecan-1-ol + reduced [NADPH--hemoprotein reductase] + O2 = 1,4-dodecanediol + oxidized [NADPH--hemoprotein reductase] + H2O + H(+). The catalysed reaction is dodecan-1-ol + reduced [NADPH--hemoprotein reductase] + O2 = 1,3-dodecanediol + oxidized [NADPH--hemoprotein reductase] + H2O + H(+). In terms of biological role, self-sufficient cytochrome P450 monooxygenase that catalyzes the regioselective in-chain hydroxylation of alkanes, fatty alcohols, and fatty acids. Preferentially hydroxylates 1-dodecanol at C3 and C4 (positions omega-8 and omega-9). It is very likely that CYP505U2 prefers dodecanol, and probably other fatty alcohols, over fatty acids as substrates. Does not show any significant activity toward tetradecanoic acid. The sequence is that of Self-sufficient cytochrome P450 monooxygenase CYP505U2 from Exserohilum turcicum (strain 28A) (Northern leaf blight fungus).